The chain runs to 633 residues: Guanylate-binding protein 6 (633 aa).

Positions 1–310 are GTPase domain (Globular); that stretch reads MESGPKMLAP…EAVNSGAVPC (310 aa). Positions 35–277 constitute a GB1/RHD3-type G domain; that stretch reads SQPVVVVAIV…FSSYIFTHAR (243 aa). GTP-binding positions include 45–52, 67–69, and 97–101; these read GLYRTGKS, LGS, and DTEGL.

Belongs to the TRAFAC class dynamin-like GTPase superfamily. GB1/RHD3 GTPase family. GB1 subfamily.

The protein localises to the cytoplasmic vesicle. The catalysed reaction is GTP + H2O = GDP + phosphate + H(+). In terms of biological role, interferon (IFN)-inducible GTPase that plays important roles in innate immunity against a diverse range of bacterial, viral and protozoan pathogens, such as bacterial pathogens Listeria monocytogenes and Mycobacterium bovis BCG as well as the protozoan pathogen Toxoplasma gondii. Confers protection to several pathogens, including the bacterial pathogens Listeria monocytogenes and Mycobacterium bovis BCG as well as the protozoan pathogen Toxoplasma gondii. The protein is Guanylate-binding protein 6 (GBP6) of Pongo abelii (Sumatran orangutan).